A 152-amino-acid polypeptide reads, in one-letter code: uncharacterized protein (152 aa).

This sequence belongs to the antirestriction protein family.

This is an uncharacterized protein from Escherichia coli (strain K12).